The primary structure comprises 166 residues: Large ribosomal subunit protein uL10 (166 aa).

It belongs to the universal ribosomal protein uL10 family. Part of the ribosomal stalk of the 50S ribosomal subunit. The N-terminus interacts with L11 and the large rRNA to form the base of the stalk. The C-terminus forms an elongated spine to which L12 dimers bind in a sequential fashion forming a multimeric L10(L12)X complex.

Its function is as follows. Forms part of the ribosomal stalk, playing a central role in the interaction of the ribosome with GTP-bound translation factors. This Neisseria gonorrhoeae (strain ATCC 700825 / FA 1090) protein is Large ribosomal subunit protein uL10.